We begin with the raw amino-acid sequence, 285 residues long: Elongation factor Ts (285 aa).

Residues Thr82–Val85 form an involved in Mg(2+) ion dislocation from EF-Tu region.

This sequence belongs to the EF-Ts family.

Its subcellular location is the cytoplasm. In terms of biological role, associates with the EF-Tu.GDP complex and induces the exchange of GDP to GTP. It remains bound to the aminoacyl-tRNA.EF-Tu.GTP complex up to the GTP hydrolysis stage on the ribosome. This Yersinia pseudotuberculosis serotype O:1b (strain IP 31758) protein is Elongation factor Ts.